We begin with the raw amino-acid sequence, 212 residues long: Orotate phosphoribosyltransferase (212 aa).

5-phospho-alpha-D-ribose 1-diphosphate-binding positions include Arg-97, Lys-101, His-103, and 123-131 (EDLISTGGS). Ser-127 contributes to the orotate binding site.

This sequence belongs to the purine/pyrimidine phosphoribosyltransferase family. PyrE subfamily. In terms of assembly, homodimer. It depends on Mg(2+) as a cofactor.

The catalysed reaction is orotidine 5'-phosphate + diphosphate = orotate + 5-phospho-alpha-D-ribose 1-diphosphate. Its pathway is pyrimidine metabolism; UMP biosynthesis via de novo pathway; UMP from orotate: step 1/2. Its function is as follows. Catalyzes the transfer of a ribosyl phosphate group from 5-phosphoribose 1-diphosphate to orotate, leading to the formation of orotidine monophosphate (OMP). The protein is Orotate phosphoribosyltransferase of Bacteroides thetaiotaomicron (strain ATCC 29148 / DSM 2079 / JCM 5827 / CCUG 10774 / NCTC 10582 / VPI-5482 / E50).